The following is a 233-amino-acid chain: Large ribosomal subunit protein uL1 (233 aa).

The protein belongs to the universal ribosomal protein uL1 family. As to quaternary structure, part of the 50S ribosomal subunit.

Its function is as follows. Binds directly to 23S rRNA. The L1 stalk is quite mobile in the ribosome, and is involved in E site tRNA release. In terms of biological role, protein L1 is also a translational repressor protein, it controls the translation of the L11 operon by binding to its mRNA. The chain is Large ribosomal subunit protein uL1 from Rhizobium johnstonii (strain DSM 114642 / LMG 32736 / 3841) (Rhizobium leguminosarum bv. viciae).